Consider the following 1036-residue polypeptide: Phytosulfokine receptor 2 (1036 aa).

Positions 1-16 are cleaved as a signal peptide; sequence MVIILLLVFFVGSSVS. N-linked (GlcNAc...) asparagine glycans are attached at residues Asn-36 and Asn-45. LRR repeat units follow at residues 89–111, 113–136, 137–159, 160–182, 185–207, 209–231, 233–256, 257–279, 281–303, 305–326, 329–351, 353–375, 377–398, 403–423, 427–450, 451–473, and 475–498; these read ELRV…ISKL, QLQV…SGLK, LIQS…GVFP, GLVM…LCSS, GIQV…YNCS, SIQQ…LYSI, ELEQ…SNLS, GLKS…FGNL, QLEH…LSQC, KLRV…NFTG, DLCV…LGHC, KMKI…FKNL, SLLF…MNVL, NLST…NNVT, NLAI…LNCK, KLEV…IGKM, and SLFY…TELK. Residues Asn-142, Asn-165, and Asn-205 are each glycosylated (N-linked (GlcNAc...) asparagine). Residues Asn-251, Asn-254, and Asn-278 are each glycosylated (N-linked (GlcNAc...) asparagine). 2 N-linked (GlcNAc...) asparagine glycosylation sites follow: Asn-313 and Asn-323. N-linked (GlcNAc...) asparagine glycans are attached at residues Asn-385, Asn-403, and Asn-421. N-linked (GlcNAc...) asparagine glycans are attached at residues Asn-483, Asn-504, Asn-523, Asn-549, and Asn-571. LRR repeat units lie at residues 561–583 and 585–606; these read ELHM…ISGL and NLEV…SFQS. Residues 680–700 form a helical membrane-spanning segment; that stretch reads IVVLTISLAIGITLLLSVILL. Thr-751 bears the Phosphothreonine mark. The 272-residue stretch at 754-1025 folds into the Protein kinase domain; that stretch reads FSQANIIGCG…PLIEEVVTWL (272 aa). Residues 760 to 768 and Lys-782 contribute to the ATP site; that span reads IGCGGFGLV. Phosphotyrosine is present on residues Tyr-827 and Tyr-867. Asp-880 acts as the Proton acceptor in catalysis. Tyr-922 carries the post-translational modification Phosphotyrosine. An LRR 20 repeat occupies 995–1020; that stretch reads RTVLEMLEIACKCIDHEPRRRPLIEE.

It belongs to the protein kinase superfamily. Ser/Thr protein kinase family.

The protein localises to the cell membrane. The catalysed reaction is L-seryl-[protein] + ATP = O-phospho-L-seryl-[protein] + ADP + H(+). It carries out the reaction L-threonyl-[protein] + ATP = O-phospho-L-threonyl-[protein] + ADP + H(+). In terms of biological role, phytosulfokine receptor with a serine/threonine-protein kinase activity. This is Phytosulfokine receptor 2 (PSKR2) from Arabidopsis thaliana (Mouse-ear cress).